The following is a 362-amino-acid chain: Phospho-N-acetylmuramoyl-pentapeptide-transferase (362 aa).

10 helical membrane passes run 28 to 48 (GATV…IALL), 73 to 93 (TPTM…LLWA), 100 to 120 (VWIV…DDYL), 134 to 154 (VKLF…VLVS), 169 to 189 (TLLI…IVGS), 201 to 221 (GLAI…VYLV), 241 to 261 (LAVF…YNAP), 264 to 284 (MVFM…AIAV), 290 to 310 (LVLA…IVQV), and 339 to 359 (TVVV…LATL).

Belongs to the glycosyltransferase 4 family. MraY subfamily. It depends on Mg(2+) as a cofactor.

It is found in the cell inner membrane. It carries out the reaction UDP-N-acetyl-alpha-D-muramoyl-L-alanyl-gamma-D-glutamyl-meso-2,6-diaminopimeloyl-D-alanyl-D-alanine + di-trans,octa-cis-undecaprenyl phosphate = di-trans,octa-cis-undecaprenyl diphospho-N-acetyl-alpha-D-muramoyl-L-alanyl-D-glutamyl-meso-2,6-diaminopimeloyl-D-alanyl-D-alanine + UMP. It functions in the pathway cell wall biogenesis; peptidoglycan biosynthesis. Functionally, catalyzes the initial step of the lipid cycle reactions in the biosynthesis of the cell wall peptidoglycan: transfers peptidoglycan precursor phospho-MurNAc-pentapeptide from UDP-MurNAc-pentapeptide onto the lipid carrier undecaprenyl phosphate, yielding undecaprenyl-pyrophosphoryl-MurNAc-pentapeptide, known as lipid I. In Parvibaculum lavamentivorans (strain DS-1 / DSM 13023 / NCIMB 13966), this protein is Phospho-N-acetylmuramoyl-pentapeptide-transferase.